Consider the following 164-residue polypeptide: Putative pre-16S rRNA nuclease (164 aa).

This sequence belongs to the YqgF nuclease family.

The protein resides in the cytoplasm. Functionally, could be a nuclease involved in processing of the 5'-end of pre-16S rRNA. This Rhizobium etli (strain CIAT 652) protein is Putative pre-16S rRNA nuclease.